The chain runs to 160 residues: Transcription elongation factor GreA (160 aa).

Residues 14-38 (IKAELASLKKERPEVIKAIAEAREE) are a coiled coil.

This sequence belongs to the GreA/GreB family.

Necessary for efficient RNA polymerase transcription elongation past template-encoded arresting sites. The arresting sites in DNA have the property of trapping a certain fraction of elongating RNA polymerases that pass through, resulting in locked ternary complexes. Cleavage of the nascent transcript by cleavage factors such as GreA or GreB allows the resumption of elongation from the new 3'terminus. GreA releases sequences of 2 to 3 nucleotides. In Maridesulfovibrio salexigens (strain ATCC 14822 / DSM 2638 / NCIMB 8403 / VKM B-1763) (Desulfovibrio salexigens), this protein is Transcription elongation factor GreA.